The sequence spans 250 residues: Triosephosphate isomerase (250 aa).

Residue Asn-9–Lys-11 coordinates substrate. Catalysis depends on His-96, which acts as the Electrophile. The active-site Proton acceptor is the Glu-168. Residues Gly-174, Ser-216, and Gly-237–Gly-238 contribute to the substrate site.

This sequence belongs to the triosephosphate isomerase family. As to quaternary structure, homodimer.

It localises to the cytoplasm. It catalyses the reaction D-glyceraldehyde 3-phosphate = dihydroxyacetone phosphate. It participates in carbohydrate biosynthesis; gluconeogenesis. The protein operates within carbohydrate degradation; glycolysis; D-glyceraldehyde 3-phosphate from glycerone phosphate: step 1/1. In terms of biological role, involved in the gluconeogenesis. Catalyzes stereospecifically the conversion of dihydroxyacetone phosphate (DHAP) to D-glyceraldehyde-3-phosphate (G3P). In Leptospira interrogans serogroup Icterohaemorrhagiae serovar copenhageni (strain Fiocruz L1-130), this protein is Triosephosphate isomerase.